An 80-amino-acid chain; its full sequence is MKSFLLIALVLFFLFVSYASAKNKCQLPSDVGKGKASFTRYYYNEEGGKCETFIYGGVGGNSNNFLTKEDCCRECAQGSC.

Positions 1-21 (MKSFLLIALVLFFLFVSYASA) are cleaved as a signal peptide. The region spanning 25–75 (CQLPSDVGKGKASFTRYYYNEEGGKCETFIYGGVGGNSNNFLTKEDCCREC) is the BPTI/Kunitz inhibitor domain. 3 disulfide bridges follow: Cys25–Cys75, Cys50–Cys71, and Cys72–Cys80.

It belongs to the venom Kunitz-type family. Scorpion delta-Ktx subfamily. Delta-Ktx 2 sub-subfamily. Expressed by the venom gland.

The protein resides in the secreted. Its function is as follows. Serine protease inhibitor that inhibits trypsin at a molar ratio of 1:1 (Ki=160 nM). Is thermostable. This chain is Kunitz-type serine protease inhibitor LmKTT-1b, found in Lychas mucronatus (Chinese swimming scorpion).